The chain runs to 61 residues: Bowman-Birk type proteinase inhibitor B5 (61 aa).

Intrachain disulfides connect cysteine 5–cysteine 60, cysteine 6–cysteine 22, cysteine 9–cysteine 56, cysteine 12–cysteine 20, cysteine 29–cysteine 36, and cysteine 33–cysteine 48.

This sequence belongs to the Bowman-Birk serine protease inhibitor family. In terms of tissue distribution, expressed in bulb (at protein level).

Serine protease inhibitor. Inhibits trypsin (Ki = 41 nM) and weakly inhibits chymotrypsin (Ki = 410 nM). Does not inhibit bacterial subtilisin. This chain is Bowman-Birk type proteinase inhibitor B5, found in Hyacinthus orientalis (Common hyacinth).